The following is a 798-amino-acid chain: Phenylalanine--tRNA ligase beta subunit (798 aa).

One can recognise a tRNA-binding domain in the interval 39–148; that stretch reads NPIFDGFLVG…EDIPIGKKIN (110 aa). The region spanning 402–477 is the B5 domain; that stretch reads SCSNKIKLYH…RIYNYNNIPL (76 aa). 3 residues coordinate Mg(2+): Asp455, Asp461, and Asp465. In terms of domain architecture, FDX-ACB spans 704-797; that stretch reads SKYPTSRRDI…LKKKFQVVLR (94 aa).

The protein belongs to the phenylalanyl-tRNA synthetase beta subunit family. Type 1 subfamily. As to quaternary structure, tetramer of two alpha and two beta subunits. Mg(2+) serves as cofactor.

The protein localises to the cytoplasm. The enzyme catalyses tRNA(Phe) + L-phenylalanine + ATP = L-phenylalanyl-tRNA(Phe) + AMP + diphosphate + H(+). The chain is Phenylalanine--tRNA ligase beta subunit (pheT) from Buchnera aphidicola subsp. Schizaphis graminum (strain Sg).